The sequence spans 668 residues: Fe(2+) transporter FeoB (668 aa).

A FeoB-type G domain is found at 3–165 (SYEIALIGNP…KKAISIAVKD (163 aa)). 10-17 (GNPNVGKS) provides a ligand contact to GTP. Mg(2+) contacts are provided by asparagine 21, alanine 22, threonine 24, and glycine 25. GTP-binding positions include 35–39 (GVTVE), 56–59 (DLPG), 116–119 (NKMD), and 145–147 (SAA). The next 8 helical transmembrane spans lie at 344–364 (VGAVLVFFPILAFLFFAISFL), 386–406 (LPGKAVISMVMGFGCNVPAIM), 418–438 (ILTILINPLLSCSARLPIYAL), 450–470 (VVILSMYALGVVLALITAFLF), 515–535 (IIVFGVILVWVLSVYGPSGYL), 574–594 (ALVFGIIAKEVVVGSLAMLYG), 613–633 (AYAFMAFSLIYLPCIATLAVI), and 643–663 (LFAVTYEMILAYVVALVISVI).

It belongs to the TRAFAC class TrmE-Era-EngA-EngB-Septin-like GTPase superfamily. FeoB GTPase (TC 9.A.8) family. As to quaternary structure, the crystallized N-terminal domain is a homodimer.

It is found in the cell membrane. Functionally, probable transporter of a GTP-driven Fe(2+) uptake system, might be able to transport Fe(2+) into or out of the cell. This chain is Fe(2+) transporter FeoB, found in Methanocaldococcus jannaschii (strain ATCC 43067 / DSM 2661 / JAL-1 / JCM 10045 / NBRC 100440) (Methanococcus jannaschii).